The primary structure comprises 297 residues: Light-independent protochlorophyllide reductase iron-sulfur ATP-binding protein (297 aa).

ATP-binding positions include 41 to 46 (GIGKST) and lysine 70. Residue serine 45 coordinates Mg(2+). Positions 126 and 160 each coordinate [4Fe-4S] cluster. ATP contacts are provided by residues 211 to 212 (NR) and 235 to 237 (PDL).

It belongs to the NifH/BchL/ChlL family. Homodimer. Protochlorophyllide reductase is composed of three subunits; BchL, BchN and BchB. [4Fe-4S] cluster serves as cofactor.

The enzyme catalyses chlorophyllide a + oxidized 2[4Fe-4S]-[ferredoxin] + 2 ADP + 2 phosphate = protochlorophyllide a + reduced 2[4Fe-4S]-[ferredoxin] + 2 ATP + 2 H2O. Its pathway is porphyrin-containing compound metabolism; bacteriochlorophyll biosynthesis (light-independent). Its function is as follows. Component of the dark-operative protochlorophyllide reductase (DPOR) that uses Mg-ATP and reduced ferredoxin to reduce ring D of protochlorophyllide (Pchlide) to form chlorophyllide a (Chlide). This reaction is light-independent. The L component serves as a unique electron donor to the NB-component of the complex, and binds Mg-ATP. The sequence is that of Light-independent protochlorophyllide reductase iron-sulfur ATP-binding protein from Methylorubrum extorquens (strain CM4 / NCIMB 13688) (Methylobacterium extorquens).